The sequence spans 147 residues: Small ribosomal subunit protein uS13 (147 aa).

The interval 115 to 147 (SYKGRRHEAGLPVRGQRTKSTFRNSSSVGVKRS) is disordered. A compositionally biased stretch (polar residues) spans 132–147 (TKSTFRNSSSVGVKRS).

The protein belongs to the universal ribosomal protein uS13 family. Part of the 30S ribosomal subunit. Forms a loose heterodimer with protein S19. Forms two bridges to the 50S subunit in the 70S ribosome.

In terms of biological role, located at the top of the head of the 30S subunit, it contacts several helices of the 16S rRNA. In the 70S ribosome it contacts the 23S rRNA (bridge B1a) and protein L5 of the 50S subunit (bridge B1b), connecting the 2 subunits; these bridges are implicated in subunit movement. The protein is Small ribosomal subunit protein uS13 of Methanobrevibacter smithii (strain ATCC 35061 / DSM 861 / OCM 144 / PS).